The following is a 51-amino-acid chain: Large ribosomal subunit protein bL33 (51 aa).

It belongs to the bacterial ribosomal protein bL33 family.

The sequence is that of Large ribosomal subunit protein bL33 from Hahella chejuensis (strain KCTC 2396).